A 147-amino-acid chain; its full sequence is Transthyretin (147 aa).

A signal peptide spans 1-20 (MASRRLLLLCLAGLVLVTEA). Residue Cys-30 is modified to Sulfocysteine. Lys-35 is a binding site for L-thyroxine. At Glu-62 the chain carries 4-carboxyglutamate. Glu-74 provides a ligand contact to L-thyroxine. A glycan (N-linked (GlcNAc...) asparagine) is linked at Asn-118. Ser-137 is an L-thyroxine binding site.

It belongs to the transthyretin family. Homotetramer. Dimer of dimers. In the homotetramer, subunits assemble around a central channel that can accommodate two ligand molecules. Interacts with RBP4. In terms of processing, sulfonation of the reactive cysteine Cys-30 enhances the stability of the native conformation of TTR, avoiding misassembly of the protein leading to amyloid formation. As to expression, detected in serum (at protein level). Detected in liver.

It localises to the secreted. In terms of biological role, thyroid hormone-binding protein. Probably transports thyroxine from the bloodstream to the brain. The polypeptide is Transthyretin (TTR) (Sorex araneus (Eurasian common shrew)).